Reading from the N-terminus, the 338-residue chain is Lipoate-protein ligase A (338 aa).

Positions 29 to 216 (PATQRVLFLW…AFFAHYGERV (188 aa)) constitute a BPL/LPL catalytic domain. ATP-binding positions include Arg71, 76-79 (GAVF), and Lys134. Lys134 lines the (R)-lipoate pocket.

The protein belongs to the LplA family. Monomer.

It localises to the cytoplasm. The catalysed reaction is L-lysyl-[lipoyl-carrier protein] + (R)-lipoate + ATP = N(6)-[(R)-lipoyl]-L-lysyl-[lipoyl-carrier protein] + AMP + diphosphate + H(+). It participates in protein modification; protein lipoylation via exogenous pathway; protein N(6)-(lipoyl)lysine from lipoate: step 1/2. The protein operates within protein modification; protein lipoylation via exogenous pathway; protein N(6)-(lipoyl)lysine from lipoate: step 2/2. Catalyzes both the ATP-dependent activation of exogenously supplied lipoate to lipoyl-AMP and the transfer of the activated lipoyl onto the lipoyl domains of lipoate-dependent enzymes. The chain is Lipoate-protein ligase A from Escherichia coli O9:H4 (strain HS).